Consider the following 716-residue polypeptide: Putative proline--tRNA ligase C19C7.06 (716 aa).

The segment at 655 to 675 (KNSARQVNGDEPEDEKAPSMG) is disordered.

This sequence belongs to the class-II aminoacyl-tRNA synthetase family.

The protein resides in the cytoplasm. The enzyme catalyses tRNA(Pro) + L-proline + ATP = L-prolyl-tRNA(Pro) + AMP + diphosphate. This is Putative proline--tRNA ligase C19C7.06 (prs1) from Schizosaccharomyces pombe (strain 972 / ATCC 24843) (Fission yeast).